The chain runs to 617 residues: Probable Xaa-Pro aminopeptidase P (617 aa).

Residues Asp-414, Asp-425, Glu-523, and Glu-537 each contribute to the Mn(2+) site.

It belongs to the peptidase M24B family. It depends on Mn(2+) as a cofactor.

It catalyses the reaction Release of any N-terminal amino acid, including proline, that is linked to proline, even from a dipeptide or tripeptide.. Its function is as follows. Catalyzes the removal of a penultimate prolyl residue from the N-termini of peptides. The polypeptide is Probable Xaa-Pro aminopeptidase P (AMPP) (Ajellomyces dermatitidis (strain ER-3 / ATCC MYA-2586) (Blastomyces dermatitidis)).